We begin with the raw amino-acid sequence, 165 residues long: HTH-type transcriptional regulator IscR (165 aa).

In terms of domain architecture, HTH rrf2-type spans 2–131 (RLTSKGRYAV…NNITLAELVS (130 aa)). Positions 28 to 51 (LAEISERQGISLSYLEQLFSRLRK) form a DNA-binding region, H-T-H motif. The [2Fe-2S] cluster site is built by cysteine 92, cysteine 98, and cysteine 104. The interval 144-165 (NDTRRPLTNGRPQETINVNLHA) is disordered. Over residues 153–165 (GRPQETINVNLHA) the composition is skewed to polar residues.

The cofactor is [2Fe-2S] cluster.

Regulates the transcription of several operons and genes involved in the biogenesis of Fe-S clusters and Fe-S-containing proteins. In Sodalis glossinidius (strain morsitans), this protein is HTH-type transcriptional regulator IscR.